Reading from the N-terminus, the 352-residue chain is Sphingosine 1-phosphate receptor 2 (352 aa).

Residues 1–34 (MGGLYSEYLNPEKVQEHYNYTKETLDMQETPSRK) lie on the Extracellular side of the membrane. Asn-19 carries an N-linked (GlcNAc...) asparagine glycan. Residues 35–59 (VASAFIIILCCAIVVENLLVLIAVA) form a helical membrane-spanning segment. Topologically, residues 60–66 (RNSKFHS) are cytoplasmic. The helical transmembrane segment at 67 to 95 (AMYLFLGNLAASDLLAGVAFVANTLLSGP) threads the bilayer. The Extracellular segment spans residues 96–109 (VTLSLTPLQWFARE). A helical membrane pass occupies residues 110-128 (GSAFITLSASVFSLLAIAI). Residues 129-147 (ERQVAIAKVKLYGSDKSCR) are Cytoplasmic-facing. Residues 148–173 (MLMLIGASWLISLILGGLPILGWNCL) form a helical membrane-spanning segment. At 174–189 (DHLEACSTVLPLYAKH) the chain is on the extracellular side. Residues 190–210 (YVLCVVTIFSVILLAIVALYV) form a helical membrane-spanning segment. Over 211–233 (RIYFVVRSSHADVAGPQTLALLK) the chain is Cytoplasmic. Residues 234 to 255 (TVTIVLGVFIICWLPAFSILLL) traverse the membrane as a helical segment. Over 256–271 (DSTCPVRACPVLYKAH) the chain is Extracellular. The helical transmembrane segment at 272-292 (YFFAFATLNSLLNPVIYTWRS) threads the bilayer. Residues 293 to 352 (RDLRREVLRPLLCWRQGKGATGRRGGNPGHRLLPLRSSSSLERGLHMPTSPTFLEGNTVV) are Cytoplasmic-facing. Cys-305 is lipidated: S-palmitoyl cysteine.

This sequence belongs to the G-protein coupled receptor 1 family. Expressed in all developing tissues with highest levels detected in primitive, transformed cells. Relative abundance: lung &gt; kidney = skin = gut &gt; spleen &gt; brain &gt; liver.

Its subcellular location is the cell membrane. Functionally, receptor for the lysosphingolipid sphingosine 1-phosphate (S1P). S1P is a bioactive lysophospholipid that elicits diverse physiological effects on most types of cells and tissues. Receptor for the chemokine-like protein FAM19A5. Mediates the inhibitory effect of FAM19A5 on vascular smooth muscle cell proliferation and migration. In lymphoid follicles, couples the binding of S1P to the activation of GNA13 and downstream inhibition of AKT activation leading to suppression of germinal center (GC) B cell growth and migration outside the GC niche. This is Sphingosine 1-phosphate receptor 2 (S1pr2) from Rattus norvegicus (Rat).